A 496-amino-acid polypeptide reads, in one-letter code: Glutamyl-tRNA(Gln) amidotransferase subunit A (496 aa).

Residues Lys-75 and Ser-150 each act as charge relay system in the active site. Catalysis depends on Ser-174, which acts as the Acyl-ester intermediate.

The protein belongs to the amidase family. GatA subfamily. In terms of assembly, heterotrimer of A, B and C subunits.

It catalyses the reaction L-glutamyl-tRNA(Gln) + L-glutamine + ATP + H2O = L-glutaminyl-tRNA(Gln) + L-glutamate + ADP + phosphate + H(+). Functionally, allows the formation of correctly charged Gln-tRNA(Gln) through the transamidation of misacylated Glu-tRNA(Gln) in organisms which lack glutaminyl-tRNA synthetase. The reaction takes place in the presence of glutamine and ATP through an activated gamma-phospho-Glu-tRNA(Gln). This is Glutamyl-tRNA(Gln) amidotransferase subunit A from Burkholderia pseudomallei (strain 668).